Consider the following 1150-residue polypeptide: Rho-type GTPase-activating protein 1 (1150 aa).

A compositionally biased stretch (basic and acidic residues) spans 1-10 (MSQRDAKKDG). Residues 1-78 (MSQRDAKKDG…AESRKALPNQ (78 aa)) are disordered. Polar residues predominate over residues 40-62 (TTKNFPHSRHTSTVAGTEGGSSL). 3 LIM zinc-binding domains span residues 114–177 (KICA…RRLD), 178–238 (LLCA…LFAA), and 483–546 (DLCY…SSNV). The disordered stretch occupies residues 586-683 (SQRKPLSVDP…SHGGSITGKS (98 aa)). Residues 598 to 617 (ENVSSTVETAKQAETTASSD) are compositionally biased toward polar residues. Residues 642-655 (SNETQSSSNSTETS) are compositionally biased toward low complexity. S690 bears the Phosphoserine mark. Residues 726–759 (AFRHMPSYTDPSYRKNSGAIYDKNDGTQKGLTPK) are disordered. Positions 837-1038 (VPLEILVERN…LLIENFEKFC (202 aa)) constitute a Rho-GAP domain. Disordered regions lie at residues 1078 to 1097 (LDERNTPKHTASTKRKRQPI) and 1104 to 1150 (LTSD…IRDS). Residues 1088–1097 (ASTKRKRQPI) are compositionally biased toward basic residues. A compositionally biased stretch (polar residues) spans 1104–1134 (LTSDVPSGSEVADTNSLSSTTKDEASPNSDA).

It is found in the cell tip. The protein localises to the nucleus. Its function is as follows. GTPase-activating protein for Rho1. Involved in the F-actin patch localization, cell morphogenesis, regulation of septation, and cell wall synthesis. This Schizosaccharomyces pombe (strain 972 / ATCC 24843) (Fission yeast) protein is Rho-type GTPase-activating protein 1 (rga1).